The chain runs to 365 residues: HLA class I histocompatibility antigen, A alpha chain (365 aa).

Positions 1–24 (MAVMAPRTLLLLLSGALALTQTWA) are cleaved as a signal peptide. The interval 3 to 11 (VMAPRTLLL) is VL9 epitope. The alpha-1 stretch occupies residues 25-114 (GSHSMRYFFT…LRGYYNQSEA (90 aa)). Residues 25–308 (GSHSMRYFFT…ELSSQPTIPI (284 aa)) are Extracellular-facing. Tyr31 is an a peptide antigen binding site. Residue Tyr83 is modified to Sulfotyrosine. Positions 97 and 108 each coordinate a peptide antigen. Asn110 carries an N-linked (GlcNAc...) asparagine glycan. The alpha-2 stretch occupies residues 115-206 (GSHTIQIMYG…ENGKETLQRT (92 aa)). A disulfide bridge links Cys125 with Cys188. Asp140, Thr167, Lys170, Tyr183, and Tyr195 together coordinate a peptide antigen. The interval 207–298 (DPPKTHMTHH…GLPKPLTLRW (92 aa)) is alpha-3. The 87-residue stretch at 209-295 (PKTHMTHHPI…QHEGLPKPLT (87 aa)) folds into the Ig-like C1-type domain. Cys227 and Cys283 are disulfide-bonded. Residues 299–308 (ELSSQPTIPI) are connecting peptide. Residues 309 to 332 (VGIIAGLVLLGAVITGAVVAAVMW) traverse the membrane as a helical segment. Over 333–365 (RRKSSDRKGGSYTQAASSDSAQGSDVSLTACKV) the chain is Cytoplasmic. The segment at 339–365 (RKGGSYTQAASSDSAQGSDVSLTACKV) is disordered. Ser343 carries the post-translational modification Phosphoserine. Tyr344 is subject to Phosphotyrosine. Over residues 346–359 (QAASSDSAQGSDVS) the composition is skewed to low complexity. Phosphoserine is present on residues Ser349, Ser350, Ser352, Ser356, and Ser359.

It belongs to the MHC class I family. As to quaternary structure, heterotrimer that consists of an alpha chain HLA-A, a beta chain B2M and a peptide (peptide-HLA-A-B2M). Early in biogenesis, HLA-A-B2M dimer interacts with the components of the peptide-loading complex composed of TAPBP, TAP1-TAP2, TAPBPL, PDIA3/ERP57 and CALR. Interacts with TAP1-TAP2 transporter via TAPBP; this interaction is obligatory for the loading of peptide epitopes delivered to the ER by TAP1-TAP2 transporter. Interacts with TAPBPL; TAPBPL binds peptide-free HLA-A-B2M complexes or those loaded with low affinity peptides, likely facilitating peptide exchange for higher affinity peptides. Only optimally assembled peptide-HLA-B2M trimer translocates to the surface of antigen-presenting cells, where it interacts with TCR and CD8 coreceptor on the surface of T cells. HLA-A (via polymorphic alpha-1 and alpha-2 domains) interacts with antigen-specific TCR (via CDR3 domains). One HLA-A molecule (mainly via nonpolymorphic alpha-3 domain) interacts with one CD8A homodimer (via CDR-like loop); this interaction ensures peptide-HLA-A-B2M recognition by CD8-positive T cells only. Alleles A*23:01; A*24:02 and A*32:01 interact (via Bw4 motif) with KIR3DL1 on NK cells; this interaction is direct. (Microbial infection) Interacts with HHV-8 MIR1 protein. In terms of assembly, (Microbial infection) Interacts with HTLV-1 accessory protein p12I. In terms of processing, (Microbial infection) Polyubiquitinated in a post ER compartment by interaction with human herpesvirus 8 MIR1 protein. This targets the protein for rapid degradation via the ubiquitin system. N-linked glycosylation at Asn-110. Ubiquitous.

It localises to the cell membrane. Its subcellular location is the endoplasmic reticulum membrane. Antigen-presenting major histocompatibility complex class I (MHCI) molecule. In complex with B2M/beta 2 microglobulin displays primarily viral and tumor-derived peptides on antigen-presenting cells for recognition by alpha-beta T cell receptor (TCR) on HLA-A-restricted CD8-positive T cells, guiding antigen-specific T cell immune response to eliminate infected or transformed cells. May also present self-peptides derived from the signal sequence of secreted or membrane proteins, although T cells specific for these peptides are usually inactivated to prevent autoreactivity. Both the peptide and the MHC molecule are recognized by TCR, the peptide is responsible for the fine specificity of antigen recognition and MHC residues account for the MHC restriction of T cells. Typically presents intracellular peptide antigens of 8 to 13 amino acids that arise from cytosolic proteolysis via IFNG-induced immunoproteasome or via endopeptidase IDE/insulin-degrading enzyme. Can bind different peptides containing allele-specific binding motifs, which are mainly defined by anchor residues at position 2 and 9. Its function is as follows. Allele A*01:01: Presents a restricted peptide repertoire including viral epitopes derived from IAV NP/nucleoprotein (CTELKLSDY), IAV PB1/polymerase basic protein 1 (VSDGGPNLY), HAdV-11 capsid L3/hexon protein (LTDLGQNLLY), SARS-CoV-2 3a/ORF3a (FTSDYYQLY) as well as tumor peptide antigens including MAGE1 (EADPTGHSY), MAGEA3 (EVDPIGHLY) and WT1 (TSEKRPFMCAY), all having in common a canonical motif with a negatively charged Asp or Glu residue at position 3 and a Tyr anchor residue at the C-terminus. A number of HLA-A*01:01-restricted peptides carry a post-translational modification with oxidation and N-terminal acetylation being the most frequent. Fails to present highly immunogenic peptides from the EBV latent antigens. Functionally, allele A*02:01: A major allele in human populations, presents immunodominant viral epitopes derived from IAV M/matrix protein 1 (GILGFVFTL), HIV-1 env (TLTSCNTSV), HIV-1 gag-pol (ILKEPVHGV), HTLV-1 Tax (LLFGYPVYV), HBV C/core antigen (FLPSDFFPS), HCMV UL83/pp65 (NLVPMVATV) as well as tumor peptide antigens including MAGEA4 (GVYDGREHTV), WT1 (RMFPNAPYL) and CTAG1A/NY-ESO-1 (SLLMWITQC), all having in common hydrophobic amino acids at position 2 and at the C-terminal anchors. In terms of biological role, allele A*03:01: Presents viral epitopes derived from IAV NP (ILRGSVAHK), HIV-1 nef (QVPLRPMTYK), HIV-1 gag-pol (AIFQSSMTK), SARS-CoV-2 N/nucleoprotein (KTFPPTEPK) as well as tumor peptide antigens including PMEL (LIYRRRLMK), NODAL (HAYIQSLLK), TRP-2 (RMYNMVPFF), all having in common hydrophobic amino acids at position 2 and Lys or Arg anchor residues at the C-terminus. May also display spliced peptides resulting from the ligation of two separate proteasomal cleavage products that are not contiguous in the parental protein. Allele A*11:01: Presents several immunodominant epitopes derived from HIV-1 gag-pol and HHV-4 EBNA4, containing the peptide motif with Val, Ile, Thr, Leu, Tyr or Phe at position 2 and Lys anchor residue at the C-terminus. Important in the control of HIV-1, EBV and HBV infections. Presents an immunodominant epitope derived from SARS-CoV-2 N/nucleoprotein (KTFPPTEPK). Its function is as follows. Allele A*23:01: Interacts with natural killer (NK) cell receptor KIR3DL1 and may contribute to functional maturation of NK cells and self-nonself discrimination during innate immune response. Functionally, allele A*24:02: Presents viral epitopes derived from HIV-1 nef (RYPLTFGWCF), EBV lytic- and latent-cycle antigens BRLF1 (TYPVLEEMF), BMLF1 (DYNFVKQLF) and LMP2 (IYVLVMLVL), SARS-CoV nucleocapsid/N (QFKDNVILL), as well as tumor peptide antigens including PRAME (LYVDSLFFL), all sharing a common signature motif, namely an aromatic residue Tyr or Phe at position 2 and a nonhydrophobic anchor residue Phe, Leu or Iso at the C-terminus. Interacts with natural killer (NK) cell receptor KIR3DL1 and may contribute to functional maturation of NK cells and self-nonself discrimination during innate immune response. In terms of biological role, allele A*26:01: Presents several epitopes derived from HIV-1 gag-pol (EVIPMFSAL, ETKLGKAGY) and env (LVSDGGPNLY), carrying as anchor residues preferentially Glu at position 1, Val or Thr at position 2 and Tyr at the C-terminus. Allele A*29:02: Presents peptides having a common motif, namely a Glu residue at position 2 and Tyr or Leu anchor residues at the C-terminus. Its function is as follows. Allele A*32:01: Interacts with natural killer (NK) cell receptor KIR3DL1 and may contribute to functional maturation of NK cells and self-nonself discrimination during innate immune response. Functionally, allele A*68:01: Presents viral epitopes derived from IAV NP (KTGGPIYKR) and HIV-1 tat (ITKGLGISYGR), having a common signature motif namely, Val or Thr at position 2 and positively charged residues Arg or Lys at the C-terminal anchor. In terms of biological role, allele A*74:01: Presents immunodominant HIV-1 epitopes derived from gag-pol (GQMVHQAISPR, QIYPGIKVR) and rev (RQIHSISER), carrying an aliphatic residue at position 2 and Arg anchor residue at the C-terminus. May contribute to viral load control in chronic HIV-1 infection. This Homo sapiens (Human) protein is HLA class I histocompatibility antigen, A alpha chain.